Consider the following 232-residue polypeptide: uncharacterized protein (232 aa).

Basic and acidic residues predominate over residues 86 to 95 (RGLPRPEFKA). The tract at residues 86 to 107 (RGLPRPEFKANGHPSMDAEADD) is disordered.

This is an uncharacterized protein from Sinorhizobium fredii (strain NBRC 101917 / NGR234).